The sequence spans 701 residues: F-box/LRR-repeat protein 17 (701 aa).

Disordered regions lie at residues 73 to 93, 227 to 250, and 279 to 321; these read SAGLEEEPPLSPPPPPPRDGA, GGGGPAGGGASPPRPPDAGCCQAP, and VRAG…IPDI. Residues 81 to 90 are compositionally biased toward pro residues; the sequence is PLSPPPPPPR. The segment covering 227-236 has biased composition (gly residues); the sequence is GGGGPAGGGA. Residues 285 to 294 are compositionally biased toward polar residues; sequence APSSAQQQPE. One can recognise an F-box domain in the interval 318–365; sequence IPDINQLPPSILLKIFSNLSLNERCLSASLVCKYWRDLCLDFQFWKQL.

It belongs to the FBXL17 family. As to quaternary structure, part of the SCF (SKP1-CUL1-F-box) E3 ubiquitin-protein ligase complex SCF(FBXL17) composed of CUL1, SKP1, RBX1 and FBXL17. Interacts with BTB domain-containing proteins such as KLHL12, BCL6 and BACH1; specifically recognizes and binds a conserved degron of non-consecutive residues present at the interface of BTB dimers of aberrant composition. Interacts with SUFU. Interacts with PRMT1.

Its subcellular location is the cytoplasm. It localises to the nucleus. In terms of biological role, substrate-recognition component of the SCF(FBXL17) E3 ubiquitin ligase complex, a key component of a quality control pathway required to ensure functional dimerization of BTB domain-containing proteins (dimerization quality control, DQC). FBXL17 specifically recognizes and binds a conserved degron of non-consecutive residues present at the interface of BTB dimers of aberrant composition: aberrant BTB dimer are then ubiquitinated by the SCF(FBXL17) complex and degraded by the proteasome. The ability of the SCF(FBXL17) complex to eliminate compromised BTB dimers is required for the differentiation and survival of neural crest and neuronal cells. The SCF(FBXL17) complex mediates ubiquitination and degradation of BACH1. The SCF(FBXL17) complex is also involved in the regulation of the hedgehog/smoothened (Hh) signaling pathway by mediating the ubiquitination and degradation of SUFU, allowing the release of GLI1 from SUFU for proper Hh signal transduction. The SCF(FBXL17) complex mediates ubiquitination and degradation of PRMT1. This is F-box/LRR-repeat protein 17 from Mus musculus (Mouse).